The sequence spans 292 residues: S-methyl-5'-thioadenosine phosphorylase (292 aa).

Phosphate is bound by residues serine 11, 53-54, and 86-87; these read RH and SA. Methionine 184 contacts substrate. Threonine 185 is a phosphate binding site. 208–210 provides a ligand contact to substrate; sequence DYD.

This sequence belongs to the PNP/MTAP phosphorylase family. MTAP subfamily. As to quaternary structure, homohexamer. Dimer of a homotrimer.

The enzyme catalyses S-methyl-5'-thioadenosine + phosphate = 5-(methylsulfanyl)-alpha-D-ribose 1-phosphate + adenine. It participates in amino-acid biosynthesis; L-methionine biosynthesis via salvage pathway; S-methyl-5-thio-alpha-D-ribose 1-phosphate from S-methyl-5'-thioadenosine (phosphorylase route): step 1/1. In terms of biological role, catalyzes the reversible phosphorylation of S-methyl-5'-thioadenosine (MTA) to adenine and 5-methylthioribose-1-phosphate. Involved in the breakdown of MTA, a major by-product of polyamine biosynthesis. Responsible for the first step in the methionine salvage pathway after MTA has been generated from S-adenosylmethionine. Has broad substrate specificity with 6-aminopurine nucleosides as preferred substrates. This Koribacter versatilis (strain Ellin345) protein is S-methyl-5'-thioadenosine phosphorylase.